The primary structure comprises 720 residues: Armadillo repeat-containing protein 8 (720 aa).

ARM repeat units lie at residues 51 to 92 (NKQK…SLSM), 95 to 134 (ENNV…TVFT), 138 to 176 (TPVE…HCCK), 178 to 217 (PDHQ…VLAF), 224 to 265 (MTLA…YMCR), 269 to 309 (IRTD…YLIE), 313 to 352 (ELQR…ETGQ), 421 to 460 (DIRK…SLSR), 463 to 502 (QQLR…NLLL), 505 to 544 (SPSK…NMAF), 548 to 587 (QKIK…NLLS), 590 to 632 (PHID…NIAD), 635 to 674 (TAKD…NLTW), and 681 to 720 (QERQ…QYFA).

In terms of assembly, identified in the CTLH complex that contains at least MAEA, RMND5A (or alternatively its paralog RMND5B), GID8, WDR26, and RANBP9 and/or RANBP10; ARMC8 has an ancillary role in the complex.

The protein resides in the nucleus. It localises to the cytoplasm. Its function is as follows. Component of the CTLH E3 ubiquitin-protein ligase complex that mediates ubiquitination and subsequent proteasomal degradation of target proteins. This chain is Armadillo repeat-containing protein 8 (armc8), found in Xenopus laevis (African clawed frog).